Consider the following 245-residue polypeptide: Inner membrane protein YgaZ (245 aa).

Residues 1 to 24 lie on the Cytoplasmic side of the membrane; the sequence is MESPTPQPAPGSATFMEGCKDSLP. The helical transmembrane segment at 25–45 threads the bilayer; sequence IVISYIPVAFAFGLNATRLGF. The Periplasmic segment spans residues 46–63; sequence SPLESVFFSCIIYAGASQ. The helical transmembrane segment at 64–84 threads the bilayer; sequence FVITAMLAAGSSLWIAALTVM. Topologically, residues 85–109 are cytoplasmic; that stretch reads AMDVRHVLYGPSLRSRIIQRLQKSK. Residues 110-130 form a helical membrane-spanning segment; sequence TALWAFGLTDEVFAAATAKLV. The Periplasmic portion of the chain corresponds to 131–140; it reads RNNRRWSENW. Residues 141–161 form a helical membrane-spanning segment; it reads MIGIAFSSWSSWVFGTVIGAF. The Cytoplasmic portion of the chain corresponds to 162–172; sequence SGSGLLQGYPA. The chain crosses the membrane as a helical span at residues 173-193; that stretch reads VEAALGFMLPALFMSFLLASF. Residues 194-205 are Periplasmic-facing; the sequence is QRKQSLCVTAAL. Residues 206–226 form a helical membrane-spanning segment; the sequence is VGALAGVTLFSIPVAILAGIV. The Cytoplasmic portion of the chain corresponds to 227–245; the sequence is CGCLTALIQAFWQGAPDEL.

It belongs to the AzlC family.

It localises to the cell inner membrane. The polypeptide is Inner membrane protein YgaZ (ygaZ) (Escherichia coli (strain K12)).